Reading from the N-terminus, the 23-residue chain is Magainin-R1 (23 aa).

As to expression, expressed by the skin glands.

The protein resides in the secreted. Its function is as follows. Antimicrobial peptide. In Xenopus ruwenzoriensis (Uganda clawed frog), this protein is Magainin-R1.